Consider the following 130-residue polypeptide: Large ribosomal subunit protein bL19 (130 aa).

This sequence belongs to the bacterial ribosomal protein bL19 family.

Its function is as follows. This protein is located at the 30S-50S ribosomal subunit interface and may play a role in the structure and function of the aminoacyl-tRNA binding site. The protein is Large ribosomal subunit protein bL19 of Cupriavidus taiwanensis (strain DSM 17343 / BCRC 17206 / CCUG 44338 / CIP 107171 / LMG 19424 / R1) (Ralstonia taiwanensis (strain LMG 19424)).